Reading from the N-terminus, the 154-residue chain is MLRVIWKHSSRVTRSIELSNISTTNHTRSLRRLSWISPRRFYAQSWDDRQPNDKIDAHIKVQKLMDQINSRPNVLEKLEKVSNIMIEKKLVNLDGTSANEENTMKPWQMIKILMDRDLRHAMKEFKLELEKSGIQLGPEQLAPLMTVLGLEKKK.

The transit peptide at 1-42 (MLRVIWKHSSRVTRSIELSNISTTNHTRSLRRLSWISPRRFY) directs the protein to the mitochondrion.

It localises to the mitochondrion. This is an uncharacterized protein from Saccharomyces cerevisiae (strain ATCC 204508 / S288c) (Baker's yeast).